The chain runs to 275 residues: Nitrogenase iron protein 1 (275 aa).

Residue 9–16 participates in ATP binding; sequence GKGGIGKS. Residue cysteine 97 coordinates [4Fe-4S] cluster. The residue at position 100 (arginine 100) is an ADP-ribosylarginine; by dinitrogenase reductase ADP-ribosyltransferase. Residue cysteine 132 coordinates [4Fe-4S] cluster.

This sequence belongs to the NifH/BchL/ChlL family. Homodimer. [4Fe-4S] cluster serves as cofactor. Post-translationally, the reversible ADP-ribosylation of Arg-100 inactivates the nitrogenase reductase and regulates nitrogenase activity.

The enzyme catalyses N2 + 8 reduced [2Fe-2S]-[ferredoxin] + 16 ATP + 16 H2O = H2 + 8 oxidized [2Fe-2S]-[ferredoxin] + 2 NH4(+) + 16 ADP + 16 phosphate + 6 H(+). Its function is as follows. The key enzymatic reactions in nitrogen fixation are catalyzed by the nitrogenase complex, which has 2 components: the iron protein and the molybdenum-iron protein. The protein is Nitrogenase iron protein 1 (nifH1) of Methanosarcina barkeri.